The following is a 508-amino-acid chain: ATP synthase subunit alpha (508 aa).

170–177 lines the ATP pocket; the sequence is GDRQTGKT.

It belongs to the ATPase alpha/beta chains family. In terms of assembly, F-type ATPases have 2 components, CF(1) - the catalytic core - and CF(0) - the membrane proton channel. CF(1) has five subunits: alpha(3), beta(3), gamma(1), delta(1), epsilon(1). CF(0) has three main subunits: a(1), b(2) and c(9-12). The alpha and beta chains form an alternating ring which encloses part of the gamma chain. CF(1) is attached to CF(0) by a central stalk formed by the gamma and epsilon chains, while a peripheral stalk is formed by the delta and b chains.

The protein localises to the cell inner membrane. It catalyses the reaction ATP + H2O + 4 H(+)(in) = ADP + phosphate + 5 H(+)(out). In terms of biological role, produces ATP from ADP in the presence of a proton gradient across the membrane. The alpha chain is a regulatory subunit. This is ATP synthase subunit alpha from Dictyoglomus turgidum (strain DSM 6724 / Z-1310).